The chain runs to 172 residues: UPF0254 protein Mlab_1743 (172 aa).

Belongs to the UPF0254 family.

This chain is UPF0254 protein Mlab_1743, found in Methanocorpusculum labreanum (strain ATCC 43576 / DSM 4855 / Z).